We begin with the raw amino-acid sequence, 254 residues long: Cytochrome c oxidase subunit 2 (254 aa).

The Mitochondrial intermembrane segment spans residues 12–38 (DAPEPWQICYQDSATKIMSGIDKLTGE). A helical membrane pass occupies residues 39–59 (IFYYETLLLIIVGWVLISAII). Residues 60-73 (KYTKTELSYKYFNH) lie on the Mitochondrial matrix side of the membrane. Residues 74 to 94 (GTLIEILWTCSPAFILIAISF) traverse the membrane as a helical segment. Over 95–248 (PSFKLLYLMD…KYLEWLNIHL (154 aa)) the chain is Mitochondrial intermembrane. Cu cation contacts are provided by histidine 182, cysteine 217, glutamate 219, cysteine 221, histidine 225, and methionine 228. Residue glutamate 219 coordinates Mg(2+).

Belongs to the cytochrome c oxidase subunit 2 family. Component of the cytochrome c oxidase (complex IV, CIV), a multisubunit enzyme composed of a catalytic core of 3 subunits and several supernumerary subunits. The complex exists as a monomer or a dimer and forms supercomplexes (SCs) in the inner mitochondrial membrane with ubiquinol-cytochrome c oxidoreductase (cytochrome b-c1 complex, complex III, CIII). Requires Cu cation as cofactor.

The protein localises to the mitochondrion inner membrane. It carries out the reaction 4 Fe(II)-[cytochrome c] + O2 + 8 H(+)(in) = 4 Fe(III)-[cytochrome c] + 2 H2O + 4 H(+)(out). In terms of biological role, component of the cytochrome c oxidase, the last enzyme in the mitochondrial electron transport chain which drives oxidative phosphorylation. The respiratory chain contains 3 multisubunit complexes succinate dehydrogenase (complex II, CII), ubiquinol-cytochrome c oxidoreductase (cytochrome b-c1 complex, complex III, CIII) and cytochrome c oxidase (complex IV, CIV), that cooperate to transfer electrons derived from NADH and succinate to molecular oxygen, creating an electrochemical gradient over the inner membrane that drives transmembrane transport and the ATP synthase. Cytochrome c oxidase is the component of the respiratory chain that catalyzes the reduction of oxygen to water. Electrons originating from reduced cytochrome c in the intermembrane space (IMS) are transferred via the dinuclear copper A center (CU(A)) of subunit 2 and heme A of subunit 1 to the active site in subunit 1, a binuclear center (BNC) formed by heme A3 and copper B (CU(B)). The BNC reduces molecular oxygen to 2 water molecules using 4 electrons from cytochrome c in the IMS and 4 protons from the mitochondrial matrix. The chain is Cytochrome c oxidase subunit 2 from Zancudomyces culisetae (Gut fungus).